Reading from the N-terminus, the 151-residue chain is Deoxyuridine 5'-triphosphate nucleotidohydrolase (151 aa).

Residues 70–72, Asn-83, 87–89, and Met-97 each bind substrate; these read RSG and LID.

The protein belongs to the dUTPase family. Mg(2+) is required as a cofactor.

It catalyses the reaction dUTP + H2O = dUMP + diphosphate + H(+). It functions in the pathway pyrimidine metabolism; dUMP biosynthesis; dUMP from dCTP (dUTP route): step 2/2. This enzyme is involved in nucleotide metabolism: it produces dUMP, the immediate precursor of thymidine nucleotides and it decreases the intracellular concentration of dUTP so that uracil cannot be incorporated into DNA. The sequence is that of Deoxyuridine 5'-triphosphate nucleotidohydrolase from Yersinia pseudotuberculosis serotype O:1b (strain IP 31758).